The following is a 495-amino-acid chain: Muscle LIM protein Mlp84B (495 aa).

Residues 12–63 (CPRCGKSVYAAEERLAGGYVFHKNCFKCGMCNKSLDSTNCTEHERELYCKTC) enclose the LIM zinc-binding 1 domain. A Nuclear localization signal motif is present at residues 66 to 71 (RKFGPK). One can recognise an LIM zinc-binding 2 domain in the interval 120–172 (CPRCGGYVYAAEQMLARGRSWHKECFKCGTCKKGLDSILCCEAPDKNIYCKGC). Positions 175–180 (KKFGPK) match the Nuclear localization signal motif. LIM zinc-binding domains follow at residues 222 to 274 (CPRC…CRTC), 325 to 377 (CPRC…CRAC), and 421 to 473 (CPRC…CRAC).

In the embryo, expression is restricted to the somatic, visceral, and pharyngeal muscles. Within the somatic musculature, expression is localized at the ends of muscles fibers at the point of attachment to the epidermis (at protein level). There is no expression in cardiac mesoderm or in fat body.

The protein resides in the cytoplasm. The protein localises to the nucleus. In terms of biological role, plays a role in cell differentiation late in myogenesis. Transcription factor Mef2 is essential for expression. The protein is Muscle LIM protein Mlp84B of Drosophila melanogaster (Fruit fly).